A 622-amino-acid chain; its full sequence is Low affinity potassium transport system protein Kup (622 aa).

12 consecutive transmembrane segments (helical) span residues 9 to 29, 49 to 69, 103 to 123, 137 to 157, 165 to 185, 213 to 233, 247 to 267, 276 to 296, 337 to 357, 363 to 383, 396 to 416, and 419 to 439; these read LPAI…TSPL, VFGF…IKYL, VIMG…TPAI, PQLD…LFMI, VGKL…GLGL, VSFI…ALYA, WFTV…ALLL, PFFL…AALA, IYIP…IVSF, LAAA…ILST, FVAL…TANL, and LLSG…VMTT.

This sequence belongs to the HAK/KUP transporter (TC 2.A.72) family.

Its subcellular location is the cell inner membrane. It catalyses the reaction K(+)(in) + H(+)(in) = K(+)(out) + H(+)(out). Responsible for the low-affinity transport of potassium into the cell. Likely operates as a K(+):H(+) symporter. The sequence is that of Low affinity potassium transport system protein Kup from Shigella flexneri serotype 5b (strain 8401).